The following is a 240-amino-acid chain: DNA repair protein RecO (240 aa).

The protein belongs to the RecO family.

In terms of biological role, involved in DNA repair and RecF pathway recombination. This Wolbachia sp. subsp. Drosophila simulans (strain wRi) protein is DNA repair protein RecO.